Reading from the N-terminus, the 58-residue chain is Probable U-exon protein (58 aa).

The protein is Probable U-exon protein of Snake adenovirus serotype 1 (SnAdV-1).